The primary structure comprises 218 residues: Large ribosomal subunit protein uL1 (218 aa).

The protein belongs to the universal ribosomal protein uL1 family. In terms of assembly, part of the 50S ribosomal subunit.

Probably involved in E site tRNA release. Binds directly to 23S rRNA. In terms of biological role, protein L1 is also a translational repressor protein, it controls the translation of its operon by binding to its mRNA. The chain is Large ribosomal subunit protein uL1 from Saccharolobus solfataricus (strain ATCC 35092 / DSM 1617 / JCM 11322 / P2) (Sulfolobus solfataricus).